A 242-amino-acid polypeptide reads, in one-letter code: uncharacterized protein (242 aa).

It localises to the cytoplasm. The protein resides in the nucleus. This is an uncharacterized protein from Schizosaccharomyces pombe (strain 972 / ATCC 24843) (Fission yeast).